Reading from the N-terminus, the 243-residue chain is Complement C1q tumor necrosis factor-related protein 5 (243 aa).

An N-terminal signal peptide occupies residues 1–15; that stretch reads MRPLLVLLLLGLAAG. Residues 15–125 form a disordered region; that stretch reads GSPPLDDNKI…PPPSDAPLPF (111 aa). In terms of domain architecture, Collagen-like spans 30 to 95; the sequence is GHPGLPGTPG…AGPAGPTGPA (66 aa). Residues 83–96 are compositionally biased toward low complexity; that stretch reads RGEAGPAGPTGPAG. One can recognise a C1q domain in the interval 99–238; the sequence is SVPPRSAFSA…GFLVYSDWHS (140 aa).

May interact with ERFE. Homotrimer (via collagen-like domain). May form higher order oligomers by supercoiling of the trimers.

It is found in the secreted. The sequence is that of Complement C1q tumor necrosis factor-related protein 5 (C1QTNF5) from Homo sapiens (Human).